A 262-amino-acid polypeptide reads, in one-letter code: MIHSTAKIHPSSIIEEGAKIGENVVIGPFCIVGSDVQIGKGTTLHSHVVVKGVTTIGEDNQIFQFASIGEVNQDLKYQGEPTKTIIGHRNRIRESVTIHRGTVQGGGVTRIGDDNLLMINAHIAHDCQIGNRCILANNATLAGHVELGDFVIVGGMSAIHQFVIVGAHVMLGGGSMVSQDVPPYVMAQGNHARPFGVNIEGLKRRGFDKPTLHAIRNVYKLIYRSGKTLEEVIPEIENYAQTESAVSFFLDFFTRSTRGIIR.

The protein belongs to the transferase hexapeptide repeat family. LpxA subfamily. Homotrimer.

It is found in the cytoplasm. The catalysed reaction is a (3R)-hydroxyacyl-[ACP] + UDP-N-acetyl-alpha-D-glucosamine = a UDP-3-O-[(3R)-3-hydroxyacyl]-N-acetyl-alpha-D-glucosamine + holo-[ACP]. Its pathway is glycolipid biosynthesis; lipid IV(A) biosynthesis; lipid IV(A) from (3R)-3-hydroxytetradecanoyl-[acyl-carrier-protein] and UDP-N-acetyl-alpha-D-glucosamine: step 1/6. Its function is as follows. Involved in the biosynthesis of lipid A, a phosphorylated glycolipid that anchors the lipopolysaccharide to the outer membrane of the cell. The protein is Acyl-[acyl-carrier-protein]--UDP-N-acetylglucosamine O-acyltransferase of Histophilus somni (strain 2336) (Haemophilus somnus).